A 349-amino-acid polypeptide reads, in one-letter code: NADH-quinone oxidoreductase subunit H (349 aa).

A run of 8 helical transmembrane segments spans residues 19-39 (VWTL…VAYL), 88-108 (GLFI…WAVV), 123-143 (LLFL…AGWA), 161-181 (VSYE…SASL), 202-222 (FLSW…ISGI), 249-269 (GMAF…VSIL), 284-304 (FLPD…FVFL), and 325-345 (VFIP…MSPL).

The protein belongs to the complex I subunit 1 family. NDH-1 is composed of 14 different subunits. Subunits NuoA, H, J, K, L, M, N constitute the membrane sector of the complex.

It is found in the cell inner membrane. It carries out the reaction a quinone + NADH + 5 H(+)(in) = a quinol + NAD(+) + 4 H(+)(out). NDH-1 shuttles electrons from NADH, via FMN and iron-sulfur (Fe-S) centers, to quinones in the respiratory chain. The immediate electron acceptor for the enzyme in this species is believed to be ubiquinone. Couples the redox reaction to proton translocation (for every two electrons transferred, four hydrogen ions are translocated across the cytoplasmic membrane), and thus conserves the redox energy in a proton gradient. This subunit may bind ubiquinone. The protein is NADH-quinone oxidoreductase subunit H of Aromatoleum aromaticum (strain DSM 19018 / LMG 30748 / EbN1) (Azoarcus sp. (strain EbN1)).